A 475-amino-acid chain; its full sequence is MSPQTETKTGVGFKAGVKEYKLNYYTPEYETKDTDILAAFRVTPQPGVPPEEAGAAVAAESSTGTWTTVWTDGLTSLDRYKGRCYDIEPVAGEENQFIAYVAYPLDLFEEGSVTNMFTSIVGNVFGFKALRALRLEDLRIPPAYTKTFQGPPHGIQVERDKLNKYGRPLLGCTIKPKLGLSAKNYGRAVYECLRGGLDFTKDDENVNSQPFMRWRDRFLFCAEALYKAQTETGEIKGHYLNATAGTCEEMMKRAIFARELGVPIVMHDYLTGGFTANTSLAHYCRDNGLLLHIHRAMHAVIDRQKNHGIHFRVLAKALRMSGGDHIHSGTVVGKLEGERDITLGFVDLLRDDFVEKDRSRGIYFTQDWVSLPGVLPVASGGIHVWHMPALTEIFGDDSVLQFGGGTLGHPWGNAPGAVANRVALEACVQARNEGRDLAREGNEIIREASKWSPELAAACEVWKEIKFEFEAMDTL.

Positions 1–2 are excised as a propeptide; the sequence is MS. N-acetylproline is present on proline 3. Lysine 14 is modified (N6,N6,N6-trimethyllysine). Substrate contacts are provided by asparagine 123 and threonine 173. The Proton acceptor role is filled by lysine 175. Residue lysine 177 participates in substrate binding. Positions 201, 203, and 204 each coordinate Mg(2+). Position 201 is an N6-carboxylysine (lysine 201). Histidine 294 (proton acceptor) is an active-site residue. Arginine 295, histidine 327, and serine 379 together coordinate substrate.

It belongs to the RuBisCO large chain family. Type I subfamily. Heterohexadecamer of 8 large chains and 8 small chains; disulfide-linked. The disulfide link is formed within the large subunit homodimers. It depends on Mg(2+) as a cofactor. In terms of processing, the disulfide bond which can form in the large chain dimeric partners within the hexadecamer appears to be associated with oxidative stress and protein turnover.

It localises to the plastid. Its subcellular location is the chloroplast. The catalysed reaction is 2 (2R)-3-phosphoglycerate + 2 H(+) = D-ribulose 1,5-bisphosphate + CO2 + H2O. It catalyses the reaction D-ribulose 1,5-bisphosphate + O2 = 2-phosphoglycolate + (2R)-3-phosphoglycerate + 2 H(+). RuBisCO catalyzes two reactions: the carboxylation of D-ribulose 1,5-bisphosphate, the primary event in carbon dioxide fixation, as well as the oxidative fragmentation of the pentose substrate in the photorespiration process. Both reactions occur simultaneously and in competition at the same active site. The chain is Ribulose bisphosphate carboxylase large chain from Populus tremuloides (Quaking aspen).